Consider the following 701-residue polypeptide: Ribosomal RNA large subunit methyltransferase K/L (701 aa).

The THUMP domain maps to 44-155 (QAYKICLWSR…SDKLTVYLDL (112 aa)).

Belongs to the methyltransferase superfamily. RlmKL family.

The protein resides in the cytoplasm. The enzyme catalyses guanosine(2445) in 23S rRNA + S-adenosyl-L-methionine = N(2)-methylguanosine(2445) in 23S rRNA + S-adenosyl-L-homocysteine + H(+). It catalyses the reaction guanosine(2069) in 23S rRNA + S-adenosyl-L-methionine = N(2)-methylguanosine(2069) in 23S rRNA + S-adenosyl-L-homocysteine + H(+). Functionally, specifically methylates the guanine in position 2445 (m2G2445) and the guanine in position 2069 (m7G2069) of 23S rRNA. This chain is Ribosomal RNA large subunit methyltransferase K/L, found in Pseudoalteromonas atlantica (strain T6c / ATCC BAA-1087).